Consider the following 930-residue polypeptide: uncharacterized protein (930 aa).

Positions 434-441 match the Nuclear localization signal motif; the sequence is IRRGISRK.

The protein resides in the nucleus. This is an uncharacterized protein from Chaetomium thermophilum (strain DSM 1495 / CBS 144.50 / IMI 039719) (Thermochaetoides thermophila).